The following is a 932-amino-acid chain: Transcriptional regulatory protein DagR (932 aa).

Residues L111–A343 enclose the Sigma-54 factor interaction domain. ATP-binding positions include G141–T148 and A210–E219. The 106-residue stretch at R462–I567 folds into the PRD 1 domain. A Phosphohistidine modification is found at H497. One can recognise a PTS EIIA type-4 domain in the interval D572–L708. The active-site Tele-phosphohistidine intermediate is H580. The PRD 2 domain occupies L835–S932. H870 is modified (phosphohistidine).

In terms of biological role, involved in the regulation of the catabolism of D-glucosaminate. This Salmonella typhimurium (strain 14028s / SGSC 2262) protein is Transcriptional regulatory protein DagR (dgaR).